The following is a 11103-amino-acid chain: Colossin-A (11103 aa).

Positions 1–35 (MGTIKTKFKNNYLKNSYLFIIYIILFNLVIGIANS) are cleaved as a signal peptide. Residues Asn95, Asn120, Asn137, and Asn198 are each glycosylated (N-linked (GlcNAc...) asparagine). Residues 273 to 324 (NLFAVGNYVFFDVNRDGVHETTELFAPNVKVELYDAISSTRLIASTFTDLNG) form a Kelch 1 repeat. Residues 298 to 359 (APNVKVELYD…SNGPDNVINA (62 aa)) form the CNA-B 1 domain. N-linked (GlcNAc...) asparagine glycosylation is found at Asn372, Asn386, and Asn422. The 47-residue stretch at 423-469 (LSGITVQLTTPSHVVLKTAQTDYAGNYVFDDLSEGVYSVHFILPENY) folds into the CNA-B 2 domain. The N-linked (GlcNAc...) asparagine glycan is linked to Asn493. 6 consecutive CNA-B domains span residues 551–599 (LPGV…PDGY), 676–745 (VANV…INLT), 803–871 (APFV…FTLN), 931–999 (AEGV…IDLS), 1057–1095 (LPNITMTLINNAEGGKVVQSVSTDSKGQYSFTNVPEGDY), and 1170–1231 (LSNT…FNSS). A glycan (N-linked (GlcNAc...) asparagine) is linked at Asn678. 3 N-linked (GlcNAc...) asparagine glycosylation sites follow: Asn1059, Asn1229, and Asn1239. The CNA-B 9 domain maps to 1277–1314 (ISNIPLSLISQKTNQIISSVVTDSNGKYQFEDVPPGDY). Asn1329 is a glycosylation site (N-linked (GlcNAc...) asparagine). 8 CNA-B domains span residues 1391–1458 (SDVS…FKLT), 1494–1530 (LPGVELSLQDSNGKVLDTTTTDESGNYKFDNLLPGDY), 1602–1651 (LPGV…YKQV), 1708–1779 (LSDI…VTVK), 1824–1891 (SDVS…FKLT), 1927–1963 (LPGVELSLQDSNGKVLETTTTDESGNYKFDNLLPGDY), 2035–2086 (LPGV…QVAQ), and 2141–2177 (VEGIELNLVDKDGKVIQSTTSGPNGKYQFEDVPPGDY). Asn1613 carries an N-linked (GlcNAc...) asparagine glycan. Residues 1716–1740 (TDKDGNEISNTKSGPDGKYQFEDVP) form a disordered region. N-linked (GlcNAc...) asparagine glycans are attached at residues Asn1759 and Asn1772. Asn2046 is a glycosylation site (N-linked (GlcNAc...) asparagine). N-linked (GlcNAc...) asparagine glycosylation is found at Asn2192 and Asn2311. 8 CNA-B domains span residues 2254–2321 (SDVS…FKLT), 2357–2402 (LPGV…TPIG), 2465–2514 (LPGV…YKQV), 2571–2640 (LSDI…NFVT), 2687–2754 (SDVS…FKLT), 2790–2835 (LPGV…TPIG), 2898–2947 (LPGV…YKQV), and 3004–3040 (LEGIELQLVDKDGKVIQSTTSGPDGKYQFEDVPPGDY). The N-linked (GlcNAc...) asparagine glycan is linked to Asn2476. The disordered stretch occupies residues 2580 to 2603 (DKDGNEITNTKSGPDGKYQFEDVP). Asn2622 carries N-linked (GlcNAc...) asparagine glycosylation. 2 N-linked (GlcNAc...) asparagine glycosylation sites follow: Asn2801 and Asn2909. 3 N-linked (GlcNAc...) asparagine glycosylation sites follow: Asn3048, Asn3055, and Asn3118. 4 CNA-B domains span residues 3117–3184 (SNVS…FKLT), 3220–3256 (LPGVELSLQDPNGIVIQTITTDSDGNYYFDNLLPGDY), 3328–3364 (LPGVQVIITSSNGTKIADLVTDENGKYALKDQVPGSY), and 3434–3470 (VEGIELQLVDKDGKVIQSTTSGPDGKYQFEDVPPGDY). Asn3339 carries an N-linked (GlcNAc...) asparagine glycan. Asn3485 carries an N-linked (GlcNAc...) asparagine glycan. One copy of the Kelch 2 repeat lies at 3503 to 3549 (SCFAVSGPLDNQNLGLSLFYEIGTMVWIDSNNNGKFEQPSDVLKSDV). CNA-B domains are found at residues 3547–3614 (SDVS…FKLT), 3650–3686 (LPGVELSLQDSNGKVLDTTTTDESGSYKFDNLLPGDY), and 3758–3809 (LPGV…QVAQ). Asn3769 and Asn3827 each carry an N-linked (GlcNAc...) asparagine glycan. Residues 3864–3900 (LSDITIRLTDKDGKVIQSTTSGPDGKYQFEDVPPGDY) form the CNA-B 33 domain. N-linked (GlcNAc...) asparagine glycosylation occurs at Asn3915. CNA-B domains are found at residues 3980–4047 (SDVS…FKLT), 4083–4128 (LPGV…TPIG), 4191–4240 (LPGV…YKQV), 4297–4378 (LSDI…NFVT), 4425–4492 (SDVS…FKLT), 4528–4573 (LPGV…TPIG), 4636–4685 (LPGV…YKQV), and 4742–4778 (VEGIPLTLIDKYGNSIQSTASGPNGKYQFEDVPPGDY). Asn4202 is a glycosylation site (N-linked (GlcNAc...) asparagine). The segment at 4286–4341 (NTGKQTDDSPPLSDITIRLTDKDGNEITKTKSRPDGNENSNTKSGPDGKYQFEDVP) is disordered. Basic and acidic residues predominate over residues 4304 to 4321 (LTDKDGNEITKTKSRPDG). The N-linked (GlcNAc...) asparagine glycan is linked to Asn4360. Asn4647 is a glycosylation site (N-linked (GlcNAc...) asparagine). Asn4792 and Asn4918 each carry an N-linked (GlcNAc...) asparagine glycan. CNA-B domains are found at residues 4865-4928 (ITLT…FKLT), 4964-5009 (LPGV…TPIG), 5072-5123 (LPGV…QVAQ), and 5178-5214 (LEGIELQLVDKDGKVIQSTTSGPNGKYQFEDVPPGDY). Asn5083 carries an N-linked (GlcNAc...) asparagine glycan. N-linked (GlcNAc...) asparagine glycosylation is found at Asn5229, Asn5292, and Asn5348. One copy of the Kelch 3 repeat lies at 5247–5293 (SCFAVSGPLDNQNLGLSPFYEIGTIVWIDSNNNDKFEQPSDIGKSNV). 4 consecutive CNA-B domains span residues 5291–5358 (SNVS…FKLT), 5394–5430 (LPGVELSLQDSNGKVLDTTTTDESGNYKFDNLLPGDY), 5502–5553 (LPGV…QVAQ), and 5608–5644 (LSDITIRLTDKDGNEITNTKSGPDGKYQFEDVPPGDY). N-linked (GlcNAc...) asparagine glycosylation occurs at Asn5513. Residue Asn5659 is glycosylated (N-linked (GlcNAc...) asparagine). CNA-B domains follow at residues 5724-5791 (SDVS…FKLT), 5827-5872 (LPGV…TPIG), 5935-5984 (LPGV…YKQV), and 6041-6077 (VEGIELNLVDKDGKVIQSTTSGPDGKYQFEDVPPGDY). Asn5946 carries N-linked (GlcNAc...) asparagine glycosylation. N-linked (GlcNAc...) asparagine glycans are attached at residues Asn6092 and Asn6155. 4 consecutive CNA-B domains span residues 6154 to 6221 (SNVS…FKLT), 6257 to 6302 (LPGV…TPIG), 6365 to 6416 (LPGV…QDAQ), and 6471 to 6507 (LSDITIRLTDKDGNEITNTKSGPDGKYQFEDVPPGDY). Asn6376 is a glycosylation site (N-linked (GlcNAc...) asparagine). 2 N-linked (GlcNAc...) asparagine glycosylation sites follow: Asn6522 and Asn6535. CNA-B domains lie at 6587–6654 (SDVS…FKLT), 6690–6726 (LEGVELSLQDPNGTVLQTITTDESGNYKFDNLLPGDY), 6798–6849 (LPGV…QVNQ), and 6904–6940 (VEGIPLTLIDKYGNSIQSTASGPNGKYQFEDVPPGDY). N-linked (GlcNAc...) asparagine glycans are attached at residues Asn6701, Asn6809, and Asn6848. N-linked (GlcNAc...) asparagine glycosylation is found at Asn6954, Asn7080, Asn7137, and Asn7245. CNA-B domains lie at 7023-7090 (SDVS…FKLT), 7126-7171 (LAGV…TPIG), 7234-7285 (LPGV…QDAQ), 7340-7411 (LSDI…VTVK), 7456-7523 (SDVS…FKLT), 7559-7596 (LPGVELSLQDSNGKVLDTTTTTDESGNYKFDNLLPGDY), 7668-7719 (LTGV…QVAQ), and 7774-7810 (VEGIELNLVDKDDKVIQSTTSGPDGKYQFEDVPPGDY). The tract at residues 7351–7372 (DGNEITNTKSGPDGKYQFEDVP) is disordered. Residues Asn7391 and Asn7404 are each glycosylated (N-linked (GlcNAc...) asparagine). A glycan (N-linked (GlcNAc...) asparagine) is linked at Asn7679. N-linked (GlcNAc...) asparagine glycosylation is found at Asn7825 and Asn7837. CNA-B domains lie at 7887 to 7954 (SDVS…FKLT), 7990 to 8035 (LPGV…TPIG), 8098 to 8149 (LPGV…QVAQ), 8204 to 8265 (IPNI…FSLS), 8313 to 8374 (VGKS…VVDQ), 8420 to 8456 (LPGVELSLQDSNGKVLQTTTTNESGNYKFDNLPQGDY), and 8528 to 8587 (LPGI…PFDS). N-linked (GlcNAc...) asparagine glycans are attached at residues Asn8109 and Asn8255. Residues Asn8441, Asn8539, Asn8629, Asn8636, Asn8655, Asn8693, Asn8753, Asn8811, Asn8896, Asn8930, Asn8976, Asn9023, Asn9073, Asn9087, Asn9123, Asn9137, Asn9146, Asn9149, Asn9186, Asn9297, Asn9305, Asn9349, Asn9409, Asn9419, Asn9533, Asn9543, Asn9556, Asn9601, Asn9709, Asn9718, Asn9786, Asn9839, Asn9850, Asn9867, Asn9891, Asn9941, Asn9957, Asn9989, Asn10042, Asn10096, Asn10111, Asn10174, Asn10267, Asn10315, Asn10348, Asn10360, Asn10379, Asn10394, Asn10431, Asn10477, Asn10552, Asn10581, Asn10715, Asn10786, Asn10802, Asn10943, and Asn11018 are each glycosylated (N-linked (GlcNAc...) asparagine). The stretch at 8592–8638 (CFDLLDKSITNANLGLIPLYNIGSDAWLDNLNNGVRRNDSLLVPNVT) is one Kelch 4 repeat. Residues 8634–8680 (VPNVTMSLYDNNGNLIETTITNSSGKYQFNDIQPGSYCVRATVPSNY) enclose the CNA-B 77 domain. Positions 8751–8810 (LPNVTVQLYDKVSGNILAATRSDDKGGYVVPNLLPSADYCVQFEVPPGYIVVVDSDDSVT) constitute a CNA-B 78 domain. In terms of domain architecture, CNA-B 79 spans 8965–9014 (LPGVSVSLFSPNGTSIANTITDENGKYAFKDQVPGSYCIKMIIPPHYQQV). One can recognise a CNA-B 80 domain in the interval 9071–9107 (VPNITMTLLDSQGKQINSTITNANGFYQFVDVAPGNY). The region spanning 9185 to 9220 (ANVSLSLVNTGNSEIKTTTTNSQGKYSFGQLLAGNY) is the CNA-B 81 domain. A CNA-B 82 domain is found at 9299–9332 (TITLTPNNTALPTQTTTTDVNGNYRFDNLVVGNY). CNA-B domains lie at 9407 to 9447 (LVNI…VVQF) and 9531 to 9569 (MANITVFLRSGSNLSQTIATTTTDANGTYIFTHLAPGNY). One can recognise a CNA-B 85 domain in the interval 9659–9728 (VEGITVRIYD…ATGYISIDLS (70 aa)). The CNA-B 86 domain occupies 10044 to 10103 (TLFNADGSTPNDIFGKPIQMAVTDVNGKYSIPNVPPGSYYMTVSIPPRYIISNFTTTGLV). The CNA-B 87 domain occupies 10172-10236 (LPNVTVLLLN…ITPTKLVSTS (65 aa)). The region spanning 10313 to 10370 (PGNFTVQLKSANQAVNGGLTTVPIGTVVATSPVAANGSFSIPNLQLGNYTLTLIPPSG) is the CNA-B 88 domain.

The protein belongs to the serine-aspartate repeat-containing protein (SDr) family.

It localises to the secreted. The polypeptide is Colossin-A (colA) (Dictyostelium discoideum (Social amoeba)).